A 514-amino-acid polypeptide reads, in one-letter code: Double-stranded RNA-binding protein 6 (514 aa).

DRBM domains are found at residues 1-70 and 87-155; these read MYKN…ALAR and VYKN…SLRQ. Disordered stretches follow at residues 195–268 and 455–496; these read NNPH…SRFP and EASQ…KDDH. 3 stretches are compositionally biased toward polar residues: residues 216–225, 249–263, and 473–484; these read FPQSSHSSYS, AASQ…SPNP, and SPDSLPKTQLKT.

In terms of biological role, binds double-stranded RNA. In Oryza sativa subsp. japonica (Rice), this protein is Double-stranded RNA-binding protein 6 (DRB6).